The chain runs to 608 residues: Isocitrate dehydrogenase kinase/phosphatase (608 aa).

Residues 328 to 334 (APGIKGL) and Lys349 contribute to the ATP site. Asp384 is a catalytic residue.

The protein belongs to the AceK family.

The protein localises to the cytoplasm. The enzyme catalyses L-seryl-[isocitrate dehydrogenase] + ATP = O-phospho-L-seryl-[isocitrate dehydrogenase] + ADP + H(+). Bifunctional enzyme which can phosphorylate or dephosphorylate isocitrate dehydrogenase (IDH) on a specific serine residue. This is a regulatory mechanism which enables bacteria to bypass the Krebs cycle via the glyoxylate shunt in response to the source of carbon. When bacteria are grown on glucose, IDH is fully active and unphosphorylated, but when grown on acetate or ethanol, the activity of IDH declines drastically concomitant with its phosphorylation. This chain is Isocitrate dehydrogenase kinase/phosphatase, found in Cupriavidus pinatubonensis (strain JMP 134 / LMG 1197) (Cupriavidus necator (strain JMP 134)).